A 359-amino-acid polypeptide reads, in one-letter code: Peptide chain release factor 1 (359 aa).

An N5-methylglutamine modification is found at Gln-235. A disordered region spans residues 287-312 (AQEASAMRSAQVGSGDRSERIRTYNF).

The protein belongs to the prokaryotic/mitochondrial release factor family. Post-translationally, methylated by PrmC. Methylation increases the termination efficiency of RF1.

It localises to the cytoplasm. Its function is as follows. Peptide chain release factor 1 directs the termination of translation in response to the peptide chain termination codons UAG and UAA. The protein is Peptide chain release factor 1 of Chlamydia trachomatis serovar A (strain ATCC VR-571B / DSM 19440 / HAR-13).